The chain runs to 428 residues: Putative zinc finger protein 355P (428 aa).

Positions 1-64 constitute a KRAB domain; sequence MRDEVAEKEK…KHPGLTQHNI (64 aa). C2H2-type zinc fingers lie at residues 72–94, 100–122, and 128–150; these read YKCK…QRIH, YKCE…MRAH, and YKCE…KRIH. Residues 156 to 178 form a C2H2-type 4; degenerate zinc finger; that stretch reads YKFEECDKAFYWVLSFTKHMIIH. The segment at 184-206 adopts a C2H2-type 5; degenerate zinc-finger fold; the sequence is YKYQECGKAFKWSSNLTIHKRIH. A C2H2-type 6; degenerate zinc finger spans residues 212-234; that stretch reads CKCEECGKACKQSLGLTIQKRIH. The C2H2-type 7; degenerate zinc finger occupies 263–285; that stretch reads YNCEKCGKAFYCSSNLIQNNIVH. 2 consecutive C2H2-type zinc fingers follow at residues 291–313 and 335–357; these read YKCQ…KIIH and YKCE…MIVH. A C2H2-type 10; degenerate zinc finger spans residues 363–385; the sequence is YKCEECGKAFKWSSELTIHQRIR. The segment at 391–413 adopts a C2H2-type 11 zinc-finger fold; that stretch reads YKCEECVRVFKHSSKLNEHKRNH.

This sequence belongs to the krueppel C2H2-type zinc-finger protein family.

The protein localises to the nucleus. May be involved in transcriptional regulation. The sequence is that of Putative zinc finger protein 355P (ZNF355P) from Homo sapiens (Human).